A 298-amino-acid chain; its full sequence is Probable GTP 3',8-cyclase (298 aa).

Residues 4–227 (RYGREIRSFR…MQNRKKYLID (224 aa)) enclose the Radical SAM core domain. R13 lines the GTP pocket. 2 residues coordinate [4Fe-4S] cluster: C20 and C24. Residue Y26 coordinates S-adenosyl-L-methionine. Residue C27 participates in [4Fe-4S] cluster binding. GTP is bound at residue K61. G65 provides a ligand contact to S-adenosyl-L-methionine. T91 is a GTP binding site. S115 serves as a coordination point for S-adenosyl-L-methionine. A GTP-binding site is contributed by K152. Residues C243 and C246 each coordinate [4Fe-4S] cluster. Residue 248 to 250 (RIR) coordinates GTP. C260 is a binding site for [4Fe-4S] cluster.

This sequence belongs to the radical SAM superfamily. MoaA family. The cofactor is [4Fe-4S] cluster.

It carries out the reaction GTP + AH2 + S-adenosyl-L-methionine = (8S)-3',8-cyclo-7,8-dihydroguanosine 5'-triphosphate + 5'-deoxyadenosine + L-methionine + A + H(+). It participates in cofactor biosynthesis; molybdopterin biosynthesis. Its function is as follows. Catalyzes the cyclization of GTP to (8S)-3',8-cyclo-7,8-dihydroguanosine 5'-triphosphate. The polypeptide is Probable GTP 3',8-cyclase (Methanococcus maripaludis (strain C5 / ATCC BAA-1333)).